Here is a 345-residue protein sequence, read N- to C-terminus: Nuclear distribution protein nudE-like 1 (345 aa).

Residues 28–190 are a coiled coil; it reads QSFQEARDEL…LAVRERQQEV (163 aa). A self-association region spans residues 56–166; that stretch reads VQAEQRNRDL…LDEKESLLVS (111 aa). An interaction with KATNB1 region spans residues 64 to 189; sequence DLQADNQRLK…ELAVRERQQE (126 aa). The required for interaction with PAFAH1B1 stretch occupies residues 114–133; that stretch reads YVRELEQANDDLERAKRATI. The interval 175–345 is interaction with CENPF; the sequence is RDLRQELAVR…SAPGMLPLSV (171 aa). Residues 189 to 256 form an interaction with YWHAE region; the sequence is EVTRKSAPSS…SARISALNIV (68 aa). The tract at residues 191–345 is interaction with NEFL; the sequence is TRKSAPSSPT…SAPGMLPLSV (155 aa). Residues 195–256 form an interaction with KATNA1 region; it reads APSSPTLDCE…SARISALNIV (62 aa). At S215 the chain carries Phosphoserine. Residue T219 is modified to Phosphothreonine; by CDK1 and MAPK1. S231 carries the phosphoserine modification. The tract at residues 241–280 is interaction with DISC1; sequence TSPLTPSARISALNIVGDLLRKVGALESKLAACRNFAKDQ. Phosphoserine; by CDK1 is present on S242. T245 is subject to Phosphothreonine; by CDK1 and MAPK1. A required for localization to the centrosome and interaction with dynein, dynactin, tubulin gamma, PCM1 and PCNT region spans residues 256–291; sequence VGDLLRKVGALESKLAACRNFAKDQASRKSYISGNV. C273 carries S-palmitoyl cysteine; by ZDHHC2, ZDHHC3 and ZDHHC7 lipidation. The interval 315–345 is disordered; the sequence is GAVNGFDPAPPPPGLGSSRPSSAPGMLPLSV. Residues 329-339 show a composition bias toward low complexity; it reads LGSSRPSSAPG. Residue S344 is modified to Phosphoserine.

It belongs to the nudE family. Self-associates. Interacts with DISC1, dynein, dynactin, tubulin gamma, KATNA1, KATNB1, microtubules, PAFAH1B1, PCM1, PCNT, and YWHAE. Interacts directly with NEFL and indirectly with NEFH. Interacts (via C-terminus) with CENPF. Interacts with ZNF365. Interacts with PLEKHM1 (via N- and C-terminus). Interacts with GTP-bound RAB9A; the interaction may lead to RAB9A-dynein motor tethering. Post-translationally, phosphorylated in mitosis. Can be phosphorylated by CDK1, CDK5 and MAPK1. Phosphorylation by CDK5 promotes interaction with KATNA1 and YWHAE. In terms of processing, palmitoylation at Cys-273 reduces affinity for dynein.

Its subcellular location is the cytoplasm. The protein localises to the cytoskeleton. The protein resides in the microtubule organizing center. It is found in the centrosome. It localises to the chromosome. Its subcellular location is the centromere. The protein localises to the kinetochore. The protein resides in the spindle. Functionally, required for organization of the cellular microtubule array and microtubule anchoring at the centrosome. May regulate microtubule organization at least in part by targeting the microtubule severing protein KATNA1 to the centrosome. Also positively regulates the activity of the minus-end directed microtubule motor protein dynein. May enhance dynein-mediated microtubule sliding by targeting dynein to the microtubule plus ends. Required for several dynein- and microtubule-dependent processes such as the maintenance of Golgi integrity, the centripetal motion of secretory vesicles and the coupling of the nucleus and centrosome. Also required during brain development for the migration of newly formed neurons from the ventricular/subventricular zone toward the cortical plate. Plays a role, together with DISC1, in the regulation of neurite outgrowth. Required for mitosis in some cell types but appears to be dispensible for mitosis in cortical neuronal progenitors, which instead requires NDE1. Facilitates the polymerization of neurofilaments from the individual subunits NEFH and NEFL. Positively regulates lysosome peripheral distribution and ruffled border formation in osteoclasts. Plays a role, together with DISC1, in the regulation of neurite outgrowth. May act as a RAB9A/B effector that tethers RAB9-associated late endosomes to the dynein motor for their retrograde transport to the trans-Golgi network. This Pongo abelii (Sumatran orangutan) protein is Nuclear distribution protein nudE-like 1 (NDEL1).